A 291-amino-acid polypeptide reads, in one-letter code: Dihydroorotate dehydrogenase B (NAD(+)), catalytic subunit (291 aa).

FMN contacts are provided by residues Ser-17 and 42 to 43 (KT). Substrate is bound by residues Lys-42, 67 to 71 (NAIGL), and Asn-118. Asn-118 serves as a coordination point for FMN. Ser-121 acts as the Nucleophile in catalysis. FMN contacts are provided by Lys-153 and Ile-178. 179–180 (NT) lines the substrate pocket. Residues Gly-204, 230–231 (GG), and 252–253 (GT) contribute to the FMN site.

Belongs to the dihydroorotate dehydrogenase family. Type 1 subfamily. In terms of assembly, heterotetramer of 2 PyrK and 2 PyrD type B subunits. The cofactor is FMN.

It is found in the cytoplasm. The catalysed reaction is (S)-dihydroorotate + NAD(+) = orotate + NADH + H(+). It participates in pyrimidine metabolism; UMP biosynthesis via de novo pathway; orotate from (S)-dihydroorotate (NAD(+) route): step 1/1. In terms of biological role, catalyzes the conversion of dihydroorotate to orotate with NAD(+) as electron acceptor. This Sulfolobus acidocaldarius (strain ATCC 33909 / DSM 639 / JCM 8929 / NBRC 15157 / NCIMB 11770) protein is Dihydroorotate dehydrogenase B (NAD(+)), catalytic subunit (pyrD).